Consider the following 338-residue polypeptide: Nicotinate-nucleotide--dimethylbenzimidazole phosphoribosyltransferase (338 aa).

The Proton acceptor role is filled by Glu-305.

The protein belongs to the CobT family.

The catalysed reaction is 5,6-dimethylbenzimidazole + nicotinate beta-D-ribonucleotide = alpha-ribazole 5'-phosphate + nicotinate + H(+). Its pathway is nucleoside biosynthesis; alpha-ribazole biosynthesis; alpha-ribazole from 5,6-dimethylbenzimidazole: step 1/2. Functionally, catalyzes the synthesis of alpha-ribazole-5'-phosphate from nicotinate mononucleotide (NAMN) and 5,6-dimethylbenzimidazole (DMB). The sequence is that of Nicotinate-nucleotide--dimethylbenzimidazole phosphoribosyltransferase from Novosphingobium aromaticivorans (strain ATCC 700278 / DSM 12444 / CCUG 56034 / CIP 105152 / NBRC 16084 / F199).